The chain runs to 78 residues: Large ribosomal subunit protein eL20 (78 aa).

Belongs to the eukaryotic ribosomal protein eL20 family. In terms of assembly, part of the 50S ribosomal subunit. Binds 23S rRNA.

The chain is Large ribosomal subunit protein eL20 from Pyrobaculum neutrophilum (strain DSM 2338 / JCM 9278 / NBRC 100436 / V24Sta) (Thermoproteus neutrophilus).